Here is a 387-residue protein sequence, read N- to C-terminus: Xylose isomerase (387 aa).

Residues His53 and Asp56 contribute to the active site. Mg(2+) contacts are provided by Glu180, Glu216, His219, Asp244, Asp254, Asp256, and Asp286.

The protein belongs to the xylose isomerase family. As to quaternary structure, homotetramer. It depends on Mg(2+) as a cofactor.

It is found in the cytoplasm. It carries out the reaction alpha-D-xylose = alpha-D-xylulofuranose. In Thermus thermophilus (strain ATCC 27634 / DSM 579 / HB8), this protein is Xylose isomerase (xylA).